The sequence spans 182 residues: Bifunctional protein PyrR (182 aa).

The PRPP-binding signature appears at 99–111 (VVLVDDVLFTGRT).

Belongs to the purine/pyrimidine phosphoribosyltransferase family. PyrR subfamily.

The catalysed reaction is UMP + diphosphate = 5-phospho-alpha-D-ribose 1-diphosphate + uracil. Its function is as follows. Regulates the transcription of the pyrimidine nucleotide (pyr) operon in response to exogenous pyrimidines. In terms of biological role, also displays a weak uracil phosphoribosyltransferase activity which is not physiologically significant. In Chloroflexus aurantiacus (strain ATCC 29366 / DSM 635 / J-10-fl), this protein is Bifunctional protein PyrR.